We begin with the raw amino-acid sequence, 2561 residues long: MDVSKEEGQRANGFTNGNINETTNGHTNGYTNGHTNGHTNGTTNATTNGTTNGTMNGTTNGTTNRTTNGTTNITPEFEGKLPQVPVAICGIGVRLPGGVRSDSDLFQMLVDKRDARGIVPADRYNVKAYYDPRGRPGSILTEYGYYIDEDLAQMDASMFSMSNVELSMMDPAQRLLLEVTREAFEGAGEGDFRGKNIGTFVGDFTTDWQELQYADLIHTAPYQVIGGSDFVLSNRLAYEYNLTGPSASIKTACSATAEALHEALLAIRAGSCPSAIVAGANLILTPRGGIGMTAMGVLSPDGSCKTFDSSANGFARGDSVCAIYIKRLDLALRDGNPIRAVIRACDSNADGGGSGRTFGTPNPITHEALIRKTYADAGLDLHSTSVIECHGTGTPIGDPLEAEAVANCFADGVRPVYIGSVKPNLGHGEGGSAMASIIKAVVALENRTIIPNVKFNNPNPKIAWDKNLKVPTEPLPWPQDCQERMSINSFGLGGSNTHIIIDSAASFGIPSPENSLRETANSPNEAQTSILLMSANSPSSITAMSQRYSEYIQAHPDRVEDMAFTLATRRERLKQASYCIVDHGISSNPPPPMASSGVLQTAFIFTGQGAQWMGMGKELMQQQPAFAHSIREMDTVIKSLEYAPQWSLEGILLSDNDADKSALAQTDRAQPISTALQVALVDLLATWHVYPAAVVGHSSGEVAAAYAAGILTRREAIITAFYRGHACARCEIPGGMAAVGLGRTKVEPSLKTGVVIACENSNASVTISGDRSALEEVMADLREKYPTALVRKLQVPMGYHSHHMATVADLYKELVSPHLDPKAPQVPYFSTVYGRQVQEGKAFGPSYWQLNMESPVLFRTAVSEMLKEMGPNTAHLEVGPHSALAGPLRQIYEETGNSAPYASTMVRGQNSCTAFLEAIGKLFCFGLSPQIPSTKTRTVLPDIPTYPWDYKDKFWSETRVMSNWRFKKHRTHELLGERSLESSDIEPCWRNLLRTGTVPWLADHCVGSDIVFPAAGFIAMAGAAASQLAGSDGHYTVREVNIFSALVLHETTATELITTLRKQPLTSSLQSKWFEFSISSESNGVWTKYCSGLVTASVVISAGLPEMPDTKTFPRKVDTSRWYTTMSRIGLNYGRRFVGLEEISCSPVHQVASVQITDVQDDYEPYPLHPSTLDKFLQSWTLAFTKGEYRLLTQLYLPTFIEELSVSPAPRKKISGRTLASGIPGTTVGTSLGMVDDELVFSLRGFKCKRTDESFIQNVSKPRSMTLEWHLDTDFTDLHQLIRPTRDTAPENEILERLYLLYALENWDQLKDSTSSHPHLNIYLSWLAEEVKSFTEPGHPLISDSKELVSMDVPHRRREIAFLRQRSKHYPMAAAVEVYARTCARMVEIMEGKDNLLNVLLEDDLLAKFYNYYNDASDLSSFFQAAGLNKPHMRVLEIGAGTGGWTSHALRGLTSELGDRLYEEYTITDVSHGFLNQCKERFAAHSNIKYALLDISSDPLEQGFEEGYYDIVIASNVLHATPKLVETLSRCRKVLNPAGRLLIQEACAPGSRHGYIMGLFEGWWAGREDGRVRSPLMPVEEWDARLKLAGFEGAGTVVLDGQVPFYNYANIIAQPAPTTNVQPESRLTLMTSRPELDDFSATTKTMLEEAGYQLDVCSWGAELPSDQDVVFLVDTEASVPSLADENPENLATFLRYMKDISTSTVLWVTKPAQTACPDPRNGLITGMARTLRAELDMYIATLELDKLDRSAASAVLQVLRKLQDAARLEETQEKDEKSSDIKVDFEYALSDGELLIPRFHPFVVDQALLKDVPRADSRHLEIGQRGMLNTLHWVGDTLSALGSNEVELNMTAVGMNFLDLAVAMNIVDMSQSLGKGYNALGSEGSGIVTRVGSNVTNLKIGDRVATMGVDTSVFATKLQRPAGSCVRLPSGLSDEDAAGILVPYATVLWSFIEKARLKKGQTVLIHSAAGGVGIAAIHVARWIGAEIYTTVGAQAKVDFLVNELGVARDHIFHSRDDSFVKDVLSATKGKGIDVVLNSLSGELLHATWQCVAPGGCMLEIGKRDFLGRAQLAMHLFEENRAYFGIDLSRLALSEPEALQDLLQKTMDLLEKQQLQPLWPTNTFDAVAVEDAFRYMQRGVHMGRIVVRMPEDDSILPIAPMLPKPQFKADSTYLLTGGMGGLGRSIIRWMVSYGAKDITVVSRSAGNRDVDRALITEIGELGCTLRCFAADISDMDSLQNVLSSLTKPVAGVLHMAMVLRDVGTLNMDFDSWTAALRPKVQGTWNLHDKLSGSLDFFVLFSSISGTLGSYGQANYAAGNTFLDSFVRFRHGLGQPASVIDIAAIGDVGYVAETKDVAERIGRAFGSLGTEQEFLDTLQLAIARSTEVPEQQKLSSKTTKYSEPSQIVMHNKMIPPLSDPRNTTPWKSDARMAIYRNTEEAPQSANSQSKERLGLFLVSLSTDPDQLDEPETPVLFAQEIAKRVAAFLMKGDKDDDALDTSLTLSQMGADSLVAIEIRNWWKQTFGMEISTLELNSPGQTFDSLGRLATKRLKEAYLLKNSGS.

Residues 1–77 (MDVSKEEGQR…NGTTNITPEF (77 aa)) are disordered. The span at 20-74 (NETTNGHTNGYTNGHTNGHTNGTTNATTNGTTNGTMNGTTNGTTNRTTNGTTNIT) shows a compositional bias: low complexity. The 421-residue stretch at 83–503 (QVPVAICGIG…GSNTHIIIDS (421 aa)) folds into the Ketosynthase family 3 (KS3) domain. Catalysis depends on for beta-ketoacyl synthase activity residues cysteine 253, histidine 390, and histidine 427. The malonyl-CoA:ACP transacylase (MAT) domain stretch occupies residues 603–925 (FIFTGQGAQW…LEAIGKLFCF (323 aa)). The tract at residues 972 to 1101 (HELLGERSLE…GLVTASVVIS (130 aa)) is N-terminal hotdog fold. The interval 972–1253 (HELLGERSLE…RGFKCKRTDE (282 aa)) is dehydratase (DH) domain. Residues 972 to 1257 (HELLGERSLE…CKRTDESFIQ (286 aa)) enclose the PKS/mFAS DH domain. Catalysis depends on histidine 1004, which acts as the Proton acceptor; for dehydratase activity. Residues 1112–1257 (TFPRKVDTSR…CKRTDESFIQ (146 aa)) form a C-terminal hotdog fold region. Aspartate 1174 serves as the catalytic Proton donor; for dehydratase activity. The methyltransferase (CMet) domain stretch occupies residues 1421–1599 (SFFQAAGLNK…GFEGAGTVVL (179 aa)). Positions 1826–2146 (GMLNTLHWVG…RGVHMGRIVV (321 aa)) are enoyl reductase (ER) (ER) domain. The tract at residues 2170–2343 (STYLLTGGMG…PASVIDIAAI (174 aa)) is ketoreductase (KR) domain. The region spanning 2472 to 2550 (VLFAQEIAKR…SLGRLATKRL (79 aa)) is the Carrier domain. Serine 2509 bears the O-(pantetheine 4'-phosphoryl)serine mark.

It functions in the pathway secondary metabolite biosynthesis. Highly reducing polyketide synthase (HR-PKS); part of the gene cluster that mediates the biosynthesis of squalestatin S1 (SQS1, also known as zaragozic acid A), a heavily oxidized fungal polyketide that offers potent cholesterol lowering activity by targeting squalene synthase (SS). SQS1 is composed of a 2,8-dioxobicyclic[3.2.1]octane-3,4,5-tricarboxyclic acid core that is connected to two lipophilic polyketide arms. These initial steps feature the priming of an unusual benzoic acid starter unit onto the highly reducing polyketide synthase pks2, followed by oxaloacetate extension and product release to generate a tricarboxylic acid containing product. The phenylalanine ammonia lyase (PAL) M7 and the acyl-CoA ligase M9 are involved in transforming phenylalanine into benzoyl-CoA. The citrate synthase-like protein R3 is involved in connecting the C-alpha-carbons of the hexaketide chain and oxaloacetate to afford the tricarboxylic acid unit. The potential hydrolytic enzymes, M8 and M10, are in close proximity to pks2 and may participate in product release. On the other side, the tetraketide arm is synthesized by a the squalestatin tetraketide synthase pks1 and enzymatically esterified to the core in the last biosynthetic step, by the acetyltransferase M4. The biosynthesis of the tetraketide must involve 3 rounds of chain extension. After the first and second rounds methyl-transfer occurs, and in all rounds of extension the ketoreductase and dehydratase are active. The enoyl reductase and C-MeT of pks1 are not active in the final round of extension. The acetyltransferase M4 appears to have a broad substrate selectivity for its acyl CoA substrate, allowing the in vitro synthesis of novel squalestatins. The biosynthesis of SQS1 requires several oxidative steps likely performed by oxidoreductases M1, R1 and R2. Finally, in support of the identification of the cluster as being responsible for SQS1 production, the cluster contains a gene encoding a putative squalene synthase (SS) R6, suggesting a likely mechanism for self-resistance. The protein is Squalestatin hexaketide synthase of Phoma sp. (strain ATCC 20986 / MF5453).